Here is a 302-residue protein sequence, read N- to C-terminus: Succinate--CoA ligase [ADP-forming] subunit alpha (302 aa).

Residues 17–20 (TGST), lysine 43, and 96–98 (ITE) contribute to the CoA site. Tyrosine 159 is a substrate binding site. The Tele-phosphohistidine intermediate role is filled by histidine 247.

Belongs to the succinate/malate CoA ligase alpha subunit family. In terms of assembly, heterotetramer of two alpha and two beta subunits.

It carries out the reaction succinate + ATP + CoA = succinyl-CoA + ADP + phosphate. The catalysed reaction is GTP + succinate + CoA = succinyl-CoA + GDP + phosphate. The protein operates within carbohydrate metabolism; tricarboxylic acid cycle; succinate from succinyl-CoA (ligase route): step 1/1. Functionally, succinyl-CoA synthetase functions in the citric acid cycle (TCA), coupling the hydrolysis of succinyl-CoA to the synthesis of either ATP or GTP and thus represents the only step of substrate-level phosphorylation in the TCA. The alpha subunit of the enzyme binds the substrates coenzyme A and phosphate, while succinate binding and nucleotide specificity is provided by the beta subunit. This Staphylococcus aureus (strain MRSA252) protein is Succinate--CoA ligase [ADP-forming] subunit alpha.